Consider the following 647-residue polypeptide: Chaperone protein DnaK (647 aa).

The residue at position 200 (Thr200) is a Phosphothreonine; by autocatalysis. Positions 611-631 are enriched in low complexity; the sequence is AGEQGAAGAAGAGAQQQAQPQ. The tract at residues 611–647 is disordered; that stretch reads AGEQGAAGAAGAGAQQQAQPQDDNVVDAEFKEVNDKK. Basic and acidic residues predominate over residues 638-647; that stretch reads AEFKEVNDKK.

Belongs to the heat shock protein 70 family.

Its function is as follows. Acts as a chaperone. This chain is Chaperone protein DnaK, found in Cupriavidus taiwanensis (strain DSM 17343 / BCRC 17206 / CCUG 44338 / CIP 107171 / LMG 19424 / R1) (Ralstonia taiwanensis (strain LMG 19424)).